A 391-amino-acid chain; its full sequence is Deoxyguanosinetriphosphate triphosphohydrolase-like protein (391 aa).

Residues 62 to 198 (RLTHSLEVST…ASLADDISYI (137 aa)) enclose the HD domain.

It belongs to the dGTPase family. Type 2 subfamily.

This chain is Deoxyguanosinetriphosphate triphosphohydrolase-like protein, found in Rickettsia akari (strain Hartford).